The sequence spans 135 residues: Photosystem II extrinsic protein U (135 aa).

The N-terminal stretch at 1–29 is a signal peptide; the sequence is MKRLLSWLTGALLMAGLLAGLILPGSVHA.

Belongs to the PsbU family. In terms of assembly, PSII is composed of 1 copy each of membrane proteins PsbA, PsbB, PsbC, PsbD, PsbE, PsbF, PsbH, PsbI, PsbJ, PsbK, PsbL, PsbM, PsbT, PsbX, PsbY, Psb30/Ycf12, peripheral proteins PsbO, CyanoQ (PsbQ), PsbU, PsbV and a large number of cofactors. It forms dimeric complexes.

It localises to the cellular thylakoid membrane. One of the extrinsic, lumenal subunits of photosystem II (PSII). PSII is a light-driven water plastoquinone oxidoreductase, using light energy to abstract electrons from H(2)O, generating a proton gradient subsequently used for ATP formation. The extrinsic proteins stabilize the structure of photosystem II oxygen-evolving complex (OEC), the ion environment of oxygen evolution and protect the OEC against heat-induced inactivation. The protein is Photosystem II extrinsic protein U of Parasynechococcus marenigrum (strain WH8102).